Reading from the N-terminus, the 623-residue chain is Serine/threonine-protein kinase nrc-2 (623 aa).

The tract at residues 1 to 215 (MPSTKNANGE…GLGALPPPIR (215 aa)) is disordered. 2 stretches are compositionally biased toward basic and acidic residues: residues 27–36 (SKDHKDRDAH) and 170–180 (LSKEPLEESKD). Residues 199 to 209 (LAAPDADGLGA) show a composition bias toward low complexity. The 291-residue stretch at 242-532 (FDKIKLIGKG…ASDIKTHPFF (291 aa)) folds into the Protein kinase domain. ATP contacts are provided by residues 248 to 256 (IGKGDVGKV) and Lys271. Asp367 acts as the Proton acceptor in catalysis. Residues 569 to 596 (VDISGSRQMGLKGEPLESGMVTPGENAV) form a disordered region.

Belongs to the protein kinase superfamily. Ser/Thr protein kinase family. KIN82 subfamily.

The catalysed reaction is L-seryl-[protein] + ATP = O-phospho-L-seryl-[protein] + ADP + H(+). It catalyses the reaction L-threonyl-[protein] + ATP = O-phospho-L-threonyl-[protein] + ADP + H(+). Functionally, controls entry of the cell into the asexual developmental program. Required to repress entry into the conidiation program. The chain is Serine/threonine-protein kinase nrc-2 (nrc-2) from Neurospora crassa (strain ATCC 24698 / 74-OR23-1A / CBS 708.71 / DSM 1257 / FGSC 987).